The primary structure comprises 131 residues: Transcription antitermination protein NusB (131 aa).

The protein belongs to the NusB family.

In terms of biological role, involved in transcription antitermination. Required for transcription of ribosomal RNA (rRNA) genes. Binds specifically to the boxA antiterminator sequence of the ribosomal RNA (rrn) operons. This is Transcription antitermination protein NusB from Ligilactobacillus salivarius (strain UCC118) (Lactobacillus salivarius).